Consider the following 88-residue polypeptide: MTTIRSDDLSNQITQISGSSKKEEEKKKQQMLTGVLGLQPNMASHPVLGVFLPKYAKQNGGNVDKTAFRLDLIRMLALHRLNTKTGSD.

The tract at residues 1–30 (MTTIRSDDLSNQITQISGSSKKEEEKKKQQ) is disordered. Residues 9–19 (LSNQITQISGS) are compositionally biased toward polar residues.

It belongs to the herpesviridae small capsomere-interacting protein family. As to quaternary structure, interacts with the major capsid protein/MCP.

The protein resides in the virion. Its subcellular location is the host nucleus. In terms of biological role, participates in the assembly of the infectious particles by decorating the outer surface of the capsid shell and thus forming a layer between the capsid and the tegument. Complexes composed of the major capsid protein and small capsomere-interacting protein/SCP assemble together in the host cytoplasm and are translocated to the nucleus, where they accumulate and participate in capsid assembly. This is Small capsomere-interacting protein from Human herpesvirus 6A (strain Uganda-1102) (HHV-6 variant A).